A 295-amino-acid polypeptide reads, in one-letter code: ATP synthase subunit a (295 aa).

The next 7 membrane-spanning stretches (helical) occupy residues 41–61 (KWSA…WLGF), 101–121 (YLTI…IPVA), 129–149 (IALP…VGIR), 161–181 (LVPA…IEFV), 191–211 (LAIR…VFAL), 222–242 (FVFG…ELMI), and 244–264 (VLQA…AISS).

The protein belongs to the ATPase A chain family. As to quaternary structure, F-type ATPases have 2 components, CF(1) - the catalytic core - and CF(0) - the membrane proton channel. CF(1) has five subunits: alpha(3), beta(3), gamma(1), delta(1), epsilon(1). CF(0) has three main subunits: a(1), b(2) and c(9-12). The alpha and beta chains form an alternating ring which encloses part of the gamma chain. CF(1) is attached to CF(0) by a central stalk formed by the gamma and epsilon chains, while a peripheral stalk is formed by the delta and b chains.

The protein localises to the cell membrane. In terms of biological role, key component of the proton channel; it plays a direct role in the translocation of protons across the membrane. The chain is ATP synthase subunit a from Parafrankia sp. (strain EAN1pec).